Here is a 394-residue protein sequence, read N- to C-terminus: Phosphoglycerate kinase (394 aa).

Substrate is bound by residues 21–23, R36, 59–62, R118, and R151; these read DFN and HLGR. S183 carries the phosphoserine modification. K201 provides a ligand contact to ATP. T299 is subject to Phosphothreonine. ATP-binding positions include E323 and 350-353; that span reads GGDS.

The protein belongs to the phosphoglycerate kinase family. In terms of assembly, monomer.

The protein resides in the cytoplasm. It carries out the reaction (2R)-3-phosphoglycerate + ATP = (2R)-3-phospho-glyceroyl phosphate + ADP. Its pathway is carbohydrate degradation; glycolysis; pyruvate from D-glyceraldehyde 3-phosphate: step 2/5. The sequence is that of Phosphoglycerate kinase (pgk) from Bacillus subtilis (strain 168).